A 311-amino-acid polypeptide reads, in one-letter code: Sulfate adenylyltransferase subunit 2 (311 aa).

This sequence belongs to the PAPS reductase family. CysD subfamily. As to quaternary structure, heterodimer composed of CysD, the smaller subunit, and CysN.

It catalyses the reaction sulfate + ATP + H(+) = adenosine 5'-phosphosulfate + diphosphate. It functions in the pathway sulfur metabolism; hydrogen sulfide biosynthesis; sulfite from sulfate: step 1/3. With CysN forms the ATP sulfurylase (ATPS) that catalyzes the adenylation of sulfate producing adenosine 5'-phosphosulfate (APS) and diphosphate, the first enzymatic step in sulfur assimilation pathway. APS synthesis involves the formation of a high-energy phosphoric-sulfuric acid anhydride bond driven by GTP hydrolysis by CysN coupled to ATP hydrolysis by CysD. This Methylobacterium sp. (strain 4-46) protein is Sulfate adenylyltransferase subunit 2.